A 168-amino-acid polypeptide reads, in one-letter code: Bcl2-associated agonist of cell death (168 aa).

Met-1 is modified (N-acetylmethionine). The interval 1–105 is disordered; sequence MFQIPEFEPS…RSRSAPPNLW (105 aa). Residue Ser-25 is modified to Phosphoserine. A compositionally biased stretch (polar residues) spans 49 to 60; that stretch reads SHQQEQPTSSSH. Residues Ser-75 and Ser-91 each carry the phosphoserine modification. Residues Arg-94 and Arg-96 each carry the asymmetric dimethylarginine; by PRMT1 modification. Ser-97 carries the post-translational modification Phosphoserine. Phosphoserine; by PKA, PKB, PAK1, RPS6KA1, RPS6KB1 and PKC/PRKCQ is present on Ser-99. Ser-99 bears the Phosphoserine; by PKB/AKT1 mark. The short motif at 110–124 is the BH3 element; that stretch reads YGRELRRMSDEFVDS. Phosphoserine is present on residues Ser-118 and Ser-134. Positions 125-145 are disordered; that stretch reads FKKGLPRPKSAGTATQMRQSS. Residues 136–145 show a composition bias toward polar residues; sequence GTATQMRQSS. Residue Arg-161 is modified to Omega-N-methylarginine.

This sequence belongs to the Bcl-2 family. Forms heterodimers with the anti-apoptotic proteins, Bcl-X(L), Bcl-2 and Bcl-W. Also binds protein S100A10. The Ser-75/Ser-99 phosphorylated form binds 14-3-3 proteins. Interacts with AKT1 and PIM3. Interacts (via BH3 domain) with NOL3 (via CARD domain); preventing the association of BAD with BCL2. Interacts with HIF3A (via C-terminus domain); the interaction reduces the binding between BAD and BAX. Interacts with GIMAP3/IAN4 and GIMAP5/IAN5. In terms of processing, phosphorylated on one or more of Ser-75, Ser-99, Ser-118 and Ser-134 in response to survival stimuli, which blocks its pro-apoptotic activity. Phosphorylation on Ser-99 or Ser-75 promotes heterodimerization with 14-3-3 proteins. This interaction then facilitates the phosphorylation at Ser-118, a site within the BH3 motif, leading to the release of Bcl-X(L) and the promotion of cell survival. Ser-99 is the major site of AKT/PKB phosphorylation, Ser-118 the major site of protein kinase A (CAPK) phosphorylation. Phosphorylation at Ser-99 by PKB/AKT1 is almost completely blocked by the apoptotic C-terminus cleavage product of PKN2 generated by caspases-3 activity during apoptosis. Methylation at Arg-94 and Arg-96 by PRMT1 inhibits Akt-mediated phosphorylation at Ser-99. As to expression, expressed in a wide variety of tissues.

It localises to the mitochondrion outer membrane. The protein resides in the cytoplasm. In terms of biological role, promotes cell death. Successfully competes for the binding to Bcl-X(L), Bcl-2 and Bcl-W, thereby affecting the level of heterodimerization of these proteins with BAX. Can reverse the death repressor activity of Bcl-X(L), but not that of Bcl-2. Appears to act as a link between growth factor receptor signaling and the apoptotic pathways. The protein is Bcl2-associated agonist of cell death (BAD) of Homo sapiens (Human).